Reading from the N-terminus, the 94-residue chain is Defensin alpha 5 (94 aa).

Positions 1 to 19 are cleaved as a signal peptide; it reads MRTIAILAAILLVALQAQA. 3 disulfide bridges follow: C65/C93, C67/C82, and C72/C92.

The protein belongs to the alpha-defensin family. In terms of assembly, homodimer. Homotetramer. Interacts with B.antracis lef/lethal factor. Glycosylated. In terms of processing, proteolytically cleaved at Arg-62 by trypsin. Both the propeptide form proHD5/HD5(20-94) and HD5(56-94) are cleaved into the lumenal peptide form HD5(63-94) by trypsin. Unprocessed proHD5 exerts antimicrobial activities, but peptide potency is enhanced by peptide processing. Proteolytically cleaved in duodenal fluid; derived fragments are antimicrobially active against commensal bacteria (in vitro).

The protein resides in the secreted. Its subcellular location is the cytoplasmic vesicle. It is found in the secretory vesicle. Its function is as follows. Host-defense peptide that maintains sterility in the urogenital system. Has antimicrobial activity against a wide range of bacteria, including Gram-negative E.coli, P.aeruginosa and S.typhimurium, and Gram-positive E.aerogenes, S.aureus, B.cereus, E.faecium and L.monocytogenes. Confers resistance to intestinal infection by S.typhimurium. Exhibits antimicrobial activity against enteric commensal bacteria such as B.adolescentis, L.acidophilus, B.breve, L.fermentum, B.longum and S.thermophilus. Binds to bacterial membranes and causes membrane disintegration. Induces the secretion of the chemokine IL-8 by intestinal epithelial cells. Binds to B.antracis lef/lethal factor, a major virulence factor from B.anthracis, and neutralizes its enzymatic activity. In Pan troglodytes (Chimpanzee), this protein is Defensin alpha 5 (DEFA5).